Consider the following 289-residue polypeptide: Acetyl-coenzyme A carboxylase carboxyl transferase subunit beta (289 aa).

A CoA carboxyltransferase N-terminal domain is found at 34 to 289 (MWVKCNKCGE…KLINMHQNSF (256 aa)). 4 residues coordinate Zn(2+): Cys38, Cys41, Cys57, and Cys60. The C4-type zinc-finger motif lies at 38-60 (CNKCGEILYQNDLEKNYMVCNLC).

This sequence belongs to the AccD/PCCB family. In terms of assembly, acetyl-CoA carboxylase is a heterohexamer composed of biotin carboxyl carrier protein (AccB), biotin carboxylase (AccC) and two subunits each of ACCase subunit alpha (AccA) and ACCase subunit beta (AccD). It depends on Zn(2+) as a cofactor.

The protein localises to the cytoplasm. The enzyme catalyses N(6)-carboxybiotinyl-L-lysyl-[protein] + acetyl-CoA = N(6)-biotinyl-L-lysyl-[protein] + malonyl-CoA. It functions in the pathway lipid metabolism; malonyl-CoA biosynthesis; malonyl-CoA from acetyl-CoA: step 1/1. Functionally, component of the acetyl coenzyme A carboxylase (ACC) complex. Biotin carboxylase (BC) catalyzes the carboxylation of biotin on its carrier protein (BCCP) and then the CO(2) group is transferred by the transcarboxylase to acetyl-CoA to form malonyl-CoA. The sequence is that of Acetyl-coenzyme A carboxylase carboxyl transferase subunit beta from Clostridium botulinum (strain ATCC 19397 / Type A).